The following is a 365-amino-acid chain: Probable L-tyrosine/L-aspartate decarboxylase (365 aa).

Lys-224 carries the post-translational modification N6-(pyridoxal phosphate)lysine.

Belongs to the group II decarboxylase family. MfnA subfamily. It depends on pyridoxal 5'-phosphate as a cofactor.

The enzyme catalyses L-tyrosine + H(+) = tyramine + CO2. The catalysed reaction is L-aspartate + H(+) = beta-alanine + CO2. It functions in the pathway cofactor biosynthesis; methanofuran biosynthesis. It participates in cofactor biosynthesis; coenzyme A biosynthesis. Functionally, catalyzes the decarboxylation of L-tyrosine to produce tyramine for methanofuran biosynthesis. Can also catalyze the decarboxylation of L-aspartate to produce beta-alanine for coenzyme A (CoA) biosynthesis. In Methanoregula boonei (strain DSM 21154 / JCM 14090 / 6A8), this protein is Probable L-tyrosine/L-aspartate decarboxylase.